The primary structure comprises 553 residues: Dihydroxy-acid dehydratase (553 aa).

Aspartate 78 contacts Mg(2+). Residue cysteine 119 participates in [2Fe-2S] cluster binding. The Mg(2+) site is built by aspartate 120 and lysine 121. Position 121 is an N6-carboxylysine (lysine 121). Cysteine 193 serves as a coordination point for [2Fe-2S] cluster. Glutamate 441 lines the Mg(2+) pocket. The active-site Proton acceptor is the serine 467.

The protein belongs to the IlvD/Edd family. As to quaternary structure, homodimer. It depends on [2Fe-2S] cluster as a cofactor. Requires Mg(2+) as cofactor.

The enzyme catalyses (2R)-2,3-dihydroxy-3-methylbutanoate = 3-methyl-2-oxobutanoate + H2O. It catalyses the reaction (2R,3R)-2,3-dihydroxy-3-methylpentanoate = (S)-3-methyl-2-oxopentanoate + H2O. Its pathway is amino-acid biosynthesis; L-isoleucine biosynthesis; L-isoleucine from 2-oxobutanoate: step 3/4. It functions in the pathway amino-acid biosynthesis; L-valine biosynthesis; L-valine from pyruvate: step 3/4. Functionally, functions in the biosynthesis of branched-chain amino acids. Catalyzes the dehydration of (2R,3R)-2,3-dihydroxy-3-methylpentanoate (2,3-dihydroxy-3-methylvalerate) into 2-oxo-3-methylpentanoate (2-oxo-3-methylvalerate) and of (2R)-2,3-dihydroxy-3-methylbutanoate (2,3-dihydroxyisovalerate) into 2-oxo-3-methylbutanoate (2-oxoisovalerate), the penultimate precursor to L-isoleucine and L-valine, respectively. The chain is Dihydroxy-acid dehydratase from Geobacter sp. (strain M21).